The sequence spans 359 residues: tRNA N6-adenosine threonylcarbamoyltransferase (359 aa).

Residues His-115 and His-119 each coordinate Fe cation. Residues 137–141, Asp-170, Gly-183, and Asn-283 contribute to the substrate site; that span reads LVSGG. Asp-311 contributes to the Fe cation binding site. The segment at 328–359 is disordered; the sequence is APDSLDIAPRSRWPLDEKSAPVFGTGRRGAKA.

Belongs to the KAE1 / TsaD family. Requires Fe(2+) as cofactor.

It is found in the cytoplasm. The catalysed reaction is L-threonylcarbamoyladenylate + adenosine(37) in tRNA = N(6)-L-threonylcarbamoyladenosine(37) in tRNA + AMP + H(+). In terms of biological role, required for the formation of a threonylcarbamoyl group on adenosine at position 37 (t(6)A37) in tRNAs that read codons beginning with adenine. Is involved in the transfer of the threonylcarbamoyl moiety of threonylcarbamoyl-AMP (TC-AMP) to the N6 group of A37, together with TsaE and TsaB. TsaD likely plays a direct catalytic role in this reaction. This Brucella abortus (strain S19) protein is tRNA N6-adenosine threonylcarbamoyltransferase.